The following is a 91-amino-acid chain: Putative regulatory protein PTH_1796 (91 aa).

The protein belongs to the RemA family.

This Pelotomaculum thermopropionicum (strain DSM 13744 / JCM 10971 / SI) protein is Putative regulatory protein PTH_1796.